Reading from the N-terminus, the 488-residue chain is 3-octaprenyl-4-hydroxybenzoate carboxy-lyase (488 aa).

Residue asparagine 172 coordinates Mn(2+). Prenylated FMN contacts are provided by residues 175 to 177, 189 to 191, and 194 to 195; these read IYR, RWL, and RG. Glutamate 238 serves as a coordination point for Mn(2+). Residue aspartate 287 is the Proton donor of the active site.

This sequence belongs to the UbiD family. In terms of assembly, homohexamer. It depends on prenylated FMN as a cofactor. The cofactor is Mn(2+).

The protein localises to the cell membrane. The enzyme catalyses a 4-hydroxy-3-(all-trans-polyprenyl)benzoate + H(+) = a 2-(all-trans-polyprenyl)phenol + CO2. It participates in cofactor biosynthesis; ubiquinone biosynthesis. In terms of biological role, catalyzes the decarboxylation of 3-octaprenyl-4-hydroxy benzoate to 2-octaprenylphenol, an intermediate step in ubiquinone biosynthesis. In Pseudomonas putida (strain GB-1), this protein is 3-octaprenyl-4-hydroxybenzoate carboxy-lyase.